A 270-amino-acid chain; its full sequence is 3-phenylpropionate-dihydrodiol/cinnamic acid-dihydrodiol dehydrogenase (270 aa).

10 to 34 (FITGGGSGLGLALVERFIEKGAQVA) serves as a coordination point for NAD(+). Residue Ser143 participates in substrate binding. Tyr156 (proton acceptor) is an active-site residue.

The protein belongs to the short-chain dehydrogenases/reductases (SDR) family.

It catalyses the reaction 3-(cis-5,6-dihydroxycyclohexa-1,3-dien-1-yl)propanoate + NAD(+) = 3-(2,3-dihydroxyphenyl)propanoate + NADH + H(+). The catalysed reaction is (2E)-3-(cis-5,6-dihydroxycyclohexa-1,3-dien-1-yl)prop-2-enoate + NAD(+) = (2E)-3-(2,3-dihydroxyphenyl)prop-2-enoate + NADH + H(+). It functions in the pathway aromatic compound metabolism; 3-phenylpropanoate degradation. Converts 3-phenylpropionate-dihydrodiol (PP-dihydrodiol) and cinnamic acid-dihydrodiol (CI-dihydrodiol) into 3-(2,3-dihydroxylphenyl)propanoic acid (DHPP) and 2,3-dihydroxicinnamic acid (DHCI), respectively. This is 3-phenylpropionate-dihydrodiol/cinnamic acid-dihydrodiol dehydrogenase (hcaB) from Escherichia coli.